Consider the following 421-residue polypeptide: Dihydroorotase (421 aa).

Zn(2+)-binding residues include H59 and H61. Residues 61–63 (HLR) and N93 contribute to the substrate site. 3 residues coordinate Zn(2+): D150, H177, and H230. N276 contacts substrate. D303 contacts Zn(2+). D303 is a catalytic residue. Position 307 (H307) interacts with substrate.

The protein belongs to the metallo-dependent hydrolases superfamily. DHOase family. Class I DHOase subfamily. The cofactor is Zn(2+).

It catalyses the reaction (S)-dihydroorotate + H2O = N-carbamoyl-L-aspartate + H(+). It participates in pyrimidine metabolism; UMP biosynthesis via de novo pathway; (S)-dihydroorotate from bicarbonate: step 3/3. Its function is as follows. Catalyzes the reversible cyclization of carbamoyl aspartate to dihydroorotate. The protein is Dihydroorotase of Desulfotalea psychrophila (strain LSv54 / DSM 12343).